Here is a 572-residue protein sequence, read N- to C-terminus: Proline--tRNA ligase (572 aa).

Belongs to the class-II aminoacyl-tRNA synthetase family. ProS type 1 subfamily. In terms of assembly, homodimer.

Its subcellular location is the cytoplasm. It catalyses the reaction tRNA(Pro) + L-proline + ATP = L-prolyl-tRNA(Pro) + AMP + diphosphate. Its function is as follows. Catalyzes the attachment of proline to tRNA(Pro) in a two-step reaction: proline is first activated by ATP to form Pro-AMP and then transferred to the acceptor end of tRNA(Pro). As ProRS can inadvertently accommodate and process non-cognate amino acids such as alanine and cysteine, to avoid such errors it has two additional distinct editing activities against alanine. One activity is designated as 'pretransfer' editing and involves the tRNA(Pro)-independent hydrolysis of activated Ala-AMP. The other activity is designated 'posttransfer' editing and involves deacylation of mischarged Ala-tRNA(Pro). The misacylated Cys-tRNA(Pro) is not edited by ProRS. The polypeptide is Proline--tRNA ligase (Shigella dysenteriae serotype 1 (strain Sd197)).